A 144-amino-acid polypeptide reads, in one-letter code: Superoxide dismutase [Mn] 1 (144 aa).

Mn(2+) contacts are provided by His42, Asp124, and His128.

Belongs to the iron/manganese superoxide dismutase family. It depends on Mn(2+) as a cofactor.

It carries out the reaction 2 superoxide + 2 H(+) = H2O2 + O2. Its function is as follows. Destroys superoxide anion radicals which are normally produced within the cells and which are toxic to biological systems. This Haloferax mediterranei (Halobacterium mediterranei) protein is Superoxide dismutase [Mn] 1 (sod1).